The sequence spans 237 residues: MEHKAPLVEFLGLTFNLSDMLMITITSLIVFIIAVAATRSLQLRPTGMQNFMEWVFDFVRGIINSTMDWQTGGRFLTLGVTLIMYVFVANMLGLPFSVHVNGELWWKSPTADATVTLTLAVMVVGLTHYYGVKMKGASDYLRDYTRPVAWLFPLKIIEEFANTLTLGLRLFGNIYAGEILLGLLASLGTHYGVLGAVGAAIPMMVWQAFSIFVGTIQAFIFTMLTMVYMAHKVSHDH.

The next 5 membrane-spanning stretches (helical) occupy residues 17-37, 75-95, 112-132, 179-201, and 214-234; these read LSDM…AVAA, FLTL…LGLP, DATV…YYGV, ILLG…GAAI, and GTIQ…HKVS.

This sequence belongs to the ATPase A chain family. In terms of assembly, F-type ATPases have 2 components, CF(1) - the catalytic core - and CF(0) - the membrane proton channel. CF(1) has five subunits: alpha(3), beta(3), gamma(1), delta(1), epsilon(1). CF(0) has three main subunits: a(1), b(2) and c(9-12). The alpha and beta chains form an alternating ring which encloses part of the gamma chain. CF(1) is attached to CF(0) by a central stalk formed by the gamma and epsilon chains, while a peripheral stalk is formed by the delta and b chains.

The protein localises to the cell membrane. In terms of biological role, key component of the proton channel; it plays a direct role in the translocation of protons across the membrane. In Geobacillus kaustophilus (strain HTA426), this protein is ATP synthase subunit a.